The sequence spans 987 residues: Kinesin-like protein KIN-14G (987 aa).

Residues 44-163 enclose the Calponin-homology (CH) domain; it reads SLRRYEAAGW…CILALKSYSE (120 aa). Residues 201–221 form a disordered region; it reads ISRTQSTDMLSTDQPLSSDGD. A Kinesin motor domain is found at 394-721; the sequence is NIRVYCRVRP…LKFAERVGSV (328 aa). 478 to 485 contributes to the ATP binding site; it reads GQTGSGKT. A coiled-coil region spans residues 725-754; sequence AARVNKDNSEVKELKEQIANLKMALVRKGN. Disordered stretches follow at residues 759–849 and 927–987; these read QPTA…ESKS and NIQN…SLGT. The segment covering 788-797 has biased composition (polar residues); it reads MGNTSNNSRP. Basic and acidic residues predominate over residues 840–849; it reads GKDEDRESKS. Residues 964-974 show a composition bias toward polar residues; sequence PPNTVNSQPQR.

This sequence belongs to the TRAFAC class myosin-kinesin ATPase superfamily. Kinesin family. KIN-14 subfamily. In terms of assembly, monomer. In terms of tissue distribution, flower specific.

Its subcellular location is the cytoplasm. The protein resides in the cytoskeleton. In terms of biological role, microtubule-binding motor protein. The polypeptide is Kinesin-like protein KIN-14G (Arabidopsis thaliana (Mouse-ear cress)).